We begin with the raw amino-acid sequence, 249 residues long: MADS-box transcription factor 7 (249 aa).

The MADS-box domain occupies 1–61; sequence MGRGRVELKR…GKLYEFCSTQ (61 aa). The K-box domain occupies 90-180; that stretch reads LKASRNEYLK…RRKLEESNHV (91 aa).

As to quaternary structure, may interact with the K-box of MADS6. May interact with MADS13 and MADS18. Expressed in lodicules, stamens and carpels.

It localises to the nucleus. In terms of biological role, probable transcription factor. May be involved in the control of flowering time. The polypeptide is MADS-box transcription factor 7 (MADS7) (Oryza sativa subsp. japonica (Rice)).